Reading from the N-terminus, the 459-residue chain is Glutamate--isopropylamine ligase (459 aa).

A GS beta-grasp domain is found at 19 to 115; sequence HNIDTIRLGA…VLCDIQHLNG (97 aa). Residues 122 to 459 form the GS catalytic domain; it reads PRNLLRKAIE…WELARYLDII (338 aa).

Belongs to the glutamine synthetase family.

It catalyses the reaction isopropylamine + L-glutamate + ATP = gamma-L-glutamyl-isopropylamide + ADP + phosphate + H(+). In terms of biological role, involved in the degradation of isopropylamine, which is a constituent of the herbicides atrazine. Catalyzes the ATP-dependent formation of gamma-glutamyl-isopropylamide from isopropylamine and L-glutamate. It can also use aminoalkanes, amino-alcohols (L-alaninol and D-alaninol) and amino-esters as substrates. This Pseudomonas sp protein is Glutamate--isopropylamine ligase (ipuC).